The sequence spans 584 residues: Protein BONZAI 3 (584 aa).

The tract at residues 1–23 (MGGCLSGDVKGGKQAIGGVQQRP) is disordered. Residue Gly2 is the site of N-myristoyl glycine attachment. 2 consecutive C2 domains span residues 34-167 (HNDA…TLTL) and 178-305 (NRNL…NFVY). Ca(2+) is bound by residues Asp67, Asp73, Asp126, Asp128, and Asp145. In terms of domain architecture, VWFA spans 344-563 (NFMVAVDFTA…SVVQALLEEL (220 aa)).

The protein belongs to the copine family. Interacts with BAP1 and BAP2. Ca(2+) is required as a cofactor. As to expression, expressed at an extremely low level.

The protein localises to the cell membrane. In terms of biological role, negative regulator of cell death and defense responses. Repress a number of R genes and may have effects in promoting growth and development. May function in membrane trafficking and in fusion of vesicles with plasma membrane. The chain is Protein BONZAI 3 (BON3) from Arabidopsis thaliana (Mouse-ear cress).